A 1300-amino-acid chain; its full sequence is Serine protease EspP (1300 aa).

Residues 1-55 form the signal peptide; that stretch reads MNKIYSLKYSHITGGLIAVSELSGRVSSRATGKKKHKRILALCFLGLLQSSYSFA. Residues 57–311 form the Peptidase S6 domain; that stretch reads QMDISNFYIR…NQTTIDNLKN (255 aa). Catalysis depends on charge relay system residues histidine 127, aspartate 156, and serine 263. One can recognise an Autotransporter domain in the interval 1034-1300; it reads DINGEAGAWA…AVNANFRYSF (267 aa).

Cleaved to release the mature protein from the outer membrane.

Its subcellular location is the periplasm. The protein resides in the secreted. The protein localises to the cell surface. It is found in the cell outer membrane. Its function is as follows. Serine protease with cytotoxic effect. Disrupts actin cytoskeleton resulting cell detachment in vitro. The protein is Serine protease EspP (espP) of Escherichia coli.